A 329-amino-acid chain; its full sequence is Beta-ribofuranosylphenol 5'-phosphate synthase (329 aa).

Belongs to the beta-RFA-P synthase family. In terms of assembly, homodimer. It depends on Mg(2+) as a cofactor.

The enzyme catalyses 5-phospho-alpha-D-ribose 1-diphosphate + 4-hydroxybenzoate + H(+) = 4-(beta-D-ribofuranosyl)phenol 5'-phosphate + CO2 + diphosphate. It catalyses the reaction 4-aminobenzoate + 5-phospho-alpha-D-ribose 1-diphosphate + H(+) = 4-(beta-D-ribofuranosyl)aminobenzene 5'-phosphate + CO2 + diphosphate. It participates in cofactor biosynthesis; 5,6,7,8-tetrahydromethanopterin biosynthesis. Its function is as follows. Catalyzes the condensation of 4-hydroxybenzoate (HB) with 5-phospho-alpha-D-ribose 1-diphosphate (PRPP) to produce beta-ribofuranosylphenol 5'-phosphate (beta-RFH-P). Also catalyzes the condensation of 4-aminobenzoate (pABA) with PRPP to produce beta-ribofuranosylaminobenzene 5'-phosphate (beta-RFA-P). Only 4-hydroxybenzoate is known to be biosynthesized by methanogenic archaea, but 4-aminobenzoate can be used as substrate by growing methanogens when it is present in the growth medium. The chain is Beta-ribofuranosylphenol 5'-phosphate synthase from Methanothermobacter thermautotrophicus (strain ATCC 29096 / DSM 1053 / JCM 10044 / NBRC 100330 / Delta H) (Methanobacterium thermoautotrophicum).